The primary structure comprises 54 residues: MAKKNRNKQQQEMQQQQQQHQAEFANEFAEGSSAEQARQQQQKAAGKRQKKNQQ.

Positions 1-54 are disordered; that stretch reads MAKKNRNKQQQEMQQQQQQHQAEFANEFAEGSSAEQARQQQQKAAGKRQKKNQQ. 2 stretches are compositionally biased toward low complexity: residues 10-21 and 29-44; these read QQEMQQQQQQHQ and AEGSSAEQARQQQQKA. Positions 45 to 54 are enriched in basic residues; the sequence is AGKRQKKNQQ.

This sequence belongs to the gamma-type SASP family.

Functionally, SASP are proteins degraded in the first minutes of spore germination and provide amino acids for both new protein synthesis and metabolism. These proteins may be involved in dormant spore's high resistance to UV light. The polypeptide is Small, acid-soluble spore protein gamma-type (sspA) (Alkalihalophilus pseudofirmus (strain ATCC BAA-2126 / JCM 17055 / OF4) (Bacillus pseudofirmus)).